We begin with the raw amino-acid sequence, 712 residues long: Patatin-like phospholipase domain-containing protein ACLA_029670 (712 aa).

Residues 1 to 10 (MTSAEKSATR) show a composition bias toward polar residues. Residues 1–20 (MTSAEKSATRNIYDPSALPD) are disordered. The helical transmembrane segment at 85–105 (WPFLFIVFAWITVLGIAYALT) threads the bilayer. A PNPLA domain is found at 275–466 (LCLSGGATFA…RTDIPIKALN (192 aa)). The short motif at 306–310 (GTSGG) is the GXSXG element. Ser-308 (nucleophile) is an active-site residue. The Proton acceptor role is filled by Asp-453. Over residues 649-664 (FPERHSDYKDESHYTE) the composition is skewed to basic and acidic residues. The disordered stretch occupies residues 649–686 (FPERHSDYKDESHYTEVSDSLSTNSSRPHTPDARRGSI). The span at 665 to 676 (VSDSLSTNSSRP) shows a compositional bias: polar residues. Residues 677 to 686 (HTPDARRGSI) show a composition bias toward basic and acidic residues.

The protein belongs to the PLPL family.

It is found in the membrane. Its function is as follows. Probable lipid hydrolase. The chain is Patatin-like phospholipase domain-containing protein ACLA_029670 from Aspergillus clavatus (strain ATCC 1007 / CBS 513.65 / DSM 816 / NCTC 3887 / NRRL 1 / QM 1276 / 107).